Reading from the N-terminus, the 267-residue chain is 5'-nucleotidase SurE (267 aa).

Positions 9, 10, 40, and 97 each coordinate a divalent metal cation.

The protein belongs to the SurE nucleotidase family. A divalent metal cation serves as cofactor.

The protein resides in the cytoplasm. It catalyses the reaction a ribonucleoside 5'-phosphate + H2O = a ribonucleoside + phosphate. Its function is as follows. Nucleotidase that shows phosphatase activity on nucleoside 5'-monophosphates. The chain is 5'-nucleotidase SurE from Helicobacter pylori (strain Shi470).